Reading from the N-terminus, the 2661-residue chain is 3-methylorcinaldehyde synthase tropA (2661 aa).

The tract at residues Leu-14–Asp-271 is N-terminal acylcarrier protein transacylase domain (SAT). The Ketosynthase family 3 (KS3) domain maps to Gly-380–Gln-796. Catalysis depends on for beta-ketoacyl synthase activity residues Cys-545, His-680, and His-719. Residues Leu-901 to Gly-1211 form a malonyl-CoA:ACP transacylase (MAT) domain region. The active-site For acyl/malonyl transferase activity is the Ser-988. An N-terminal hotdog fold region spans residues Pro-1283–Asp-1425. The PKS/mFAS DH domain occupies Pro-1283–Ala-1600. Positions Ser-1288–Leu-1599 are product template (PT) domain. His-1318 functions as the Proton acceptor; for dehydratase activity in the catalytic mechanism. A C-terminal hotdog fold region spans residues Ala-1453–Ala-1600. Asp-1509 serves as the catalytic Proton donor; for dehydratase activity. The disordered stretch occupies residues Ala-1614–Lys-1656. Over residues Thr-1627–Ala-1643 the composition is skewed to low complexity. The region spanning Asn-1654–Val-1731 is the Carrier 1 domain. Ser-1691 carries the O-(pantetheine 4'-phosphoryl)serine modification. Residues Glu-1734 to Ala-1762 are disordered. One can recognise a Carrier 2 domain in the interval Val-1764–Ala-1841. Ser-1801 is modified (O-(pantetheine 4'-phosphoryl)serine). Residues Gln-1998–Gly-2231 form a methyltransferase (CMeT) domain region. The interval Gly-2271–Phe-2659 is thioesterase (TE) domain.

Its pathway is secondary metabolite biosynthesis. Its function is as follows. Non-reducing polyketide synthase; part of the gene cluster that mediates the biosynthesis of the tropolone class of fungal maleic anhydrides. The pathway begins with the synthesis of 3-methylorcinaldehyde by the non-reducing polyketide synthase (PKS) tropA. 3-methylorcinaldehyde is the substrate for the FAD-dependent monooxygenase tropB to yield a dearomatized hydroxycyclohexadione. The 2-oxoglutarate-dependent dioxygenase tropC then performs the oxidative ring expansion to provide the first tropolone metabolite stipitaldehyde. Trop D converts stipitaldehyde into stipitacetal which is in turn converted to stipitalide by the short-chain dehydrogenase/reductase tropE. The next steps involve tropF, tropG, tropH, tropI and tropJ to form successive tropolone maleic anhydrides including stipitaldehydic, stipitatonic and stipitatic acids. The polypeptide is 3-methylorcinaldehyde synthase tropA (Talaromyces stipitatus (strain ATCC 10500 / CBS 375.48 / QM 6759 / NRRL 1006) (Penicillium stipitatum)).